The sequence spans 435 residues: Trigger factor (435 aa).

In terms of domain architecture, PPIase FKBP-type spans 163–248 (GDRVTIDFEG…LTRIEAQNLP (86 aa)).

Belongs to the FKBP-type PPIase family. Tig subfamily.

It is found in the cytoplasm. It catalyses the reaction [protein]-peptidylproline (omega=180) = [protein]-peptidylproline (omega=0). Involved in protein export. Acts as a chaperone by maintaining the newly synthesized protein in an open conformation. Functions as a peptidyl-prolyl cis-trans isomerase. The protein is Trigger factor of Leptothrix cholodnii (strain ATCC 51168 / LMG 8142 / SP-6) (Leptothrix discophora (strain SP-6)).